The following is a 148-amino-acid chain: MAIANNKKAFHDFFIEDRIEAGLVLEGWEVKAIRAARVQLKESYIYWKKDAFYLVGCHITALPTASTHIKPDAVRPRKLLLKQSEINKLIGKTERAGYTIVPLDLHFSRGKIKMEIGLAKGKKQHDKRQSMKEADWKREKQRLIKHTR.

The segment at alanine 119 to arginine 148 is disordered. The segment covering lysine 127–arginine 142 has biased composition (basic and acidic residues).

It belongs to the SmpB family.

It is found in the cytoplasm. Required for rescue of stalled ribosomes mediated by trans-translation. Binds to transfer-messenger RNA (tmRNA), required for stable association of tmRNA with ribosomes. tmRNA and SmpB together mimic tRNA shape, replacing the anticodon stem-loop with SmpB. tmRNA is encoded by the ssrA gene; the 2 termini fold to resemble tRNA(Ala) and it encodes a 'tag peptide', a short internal open reading frame. During trans-translation Ala-aminoacylated tmRNA acts like a tRNA, entering the A-site of stalled ribosomes, displacing the stalled mRNA. The ribosome then switches to translate the ORF on the tmRNA; the nascent peptide is terminated with the 'tag peptide' encoded by the tmRNA and targeted for degradation. The ribosome is freed to recommence translation, which seems to be the essential function of trans-translation. The chain is SsrA-binding protein from Neisseria gonorrhoeae (strain ATCC 700825 / FA 1090).